The primary structure comprises 585 residues: Glycerol-3-phosphate dehydrogenase (585 aa).

Position 37–65 (37–65) interacts with FAD; the sequence is DVVVIGGGVVGSGCALDAATRGLKVALVE.

The protein belongs to the FAD-dependent glycerol-3-phosphate dehydrogenase family. FAD serves as cofactor.

It localises to the cytoplasm. The catalysed reaction is a quinone + sn-glycerol 3-phosphate = dihydroxyacetone phosphate + a quinol. The sequence is that of Glycerol-3-phosphate dehydrogenase (glpD) from Mycobacterium leprae (strain TN).